The sequence spans 70 residues: UPF0352 protein Sfri_2492 (70 aa).

The protein belongs to the UPF0352 family.

In Shewanella frigidimarina (strain NCIMB 400), this protein is UPF0352 protein Sfri_2492.